The following is a 681-amino-acid chain: PAB-dependent poly(A)-specific ribonuclease subunit pan3-like (681 aa).

The C3H1-type zinc-finger motif lies at 9–38 (FSTNIPCRNEQLYGRCPYIDKGCFFQHKNQ). Disordered stretches follow at residues 38–58 (QDNAPASSKPPSATAIDPQNS) and 82–123 (SSAS…TVSL). A compositionally biased stretch (low complexity) spans 41–50 (APASSKPPSA). The span at 96 to 106 (KSYSSALSSGK) shows a compositional bias: polar residues. Phosphoserine is present on Ser165.

Belongs to the protein kinase superfamily. PAN3 family.

The protein resides in the cytoplasm. Regulatory subunit of the poly(A)-nuclease (PAN) deadenylation complex. The sequence is that of PAB-dependent poly(A)-specific ribonuclease subunit pan3-like from Schizosaccharomyces pombe (strain 972 / ATCC 24843) (Fission yeast).